The chain runs to 584 residues: Outer membrane transporter CdiB-2 (584 aa).

The first 20 residues, 1-20 (MATRFAILPVTALITLTAQA), serve as a signal peptide directing secretion. Residues 24–44 (PTPNDQAAAARANAEQNQQAQ) are compositionally biased toward low complexity. The interval 24 to 72 (PTPNDQAAAARANAEQNQQAQQRRDAQQRDATVQAPGVRSDVPRPEAYP) is disordered. A POTRA domain is found at 98-171 (SKAQGASALP…GALKLALIPG (74 aa)).

The protein belongs to the TPS (TC 1.B.20) family.

The protein localises to the cell outer membrane. Its function is as follows. Potential outer membrane protein component of a toxin-immunity protein module, which functions as a cellular contact-dependent growth inhibition (CDI) system. CDI modules allow bacteria to communicate with and inhibit the growth of closely related neighboring bacteria in a contact-dependent fashion. This protein may be required for secretion and assembly of the CdiA toxin protein. Expression of this cdiAIB locus in B.thailandensis confers protection against other bacteria carrying the locus; growth inhibition requires cellular contact. Functionally, probable member of a two partner secretion pathway (TPS) in which it mediates the secretion of CdiA2. In Burkholderia pseudomallei (strain 1026b), this protein is Outer membrane transporter CdiB-2 (cdiB2).